Reading from the N-terminus, the 43-residue chain is Truncated K3L homolog (43 aa).

This sequence belongs to the orthopoxvirus OPG041 family.

The protein is Truncated K3L homolog (OPG041) of Cynomys gunnisoni (Gunnison's prairie dog).